A 374-amino-acid polypeptide reads, in one-letter code: Queuine tRNA-ribosyltransferase (374 aa).

The Proton acceptor role is filled by aspartate 89. Substrate-binding positions include 89–93, aspartate 143, glutamine 187, and glycine 214; that span reads DSGGF. The RNA binding stretch occupies residues 245–251; the sequence is GVGKPED. Aspartate 264 functions as the Nucleophile in the catalytic mechanism. An RNA binding; important for wobble base 34 recognition region spans residues 269 to 273; sequence TRNAR. Positions 302, 304, 307, and 333 each coordinate Zn(2+).

This sequence belongs to the queuine tRNA-ribosyltransferase family. In terms of assembly, homodimer. Within each dimer, one monomer is responsible for RNA recognition and catalysis, while the other monomer binds to the replacement base PreQ1. Requires Zn(2+) as cofactor.

The enzyme catalyses 7-aminomethyl-7-carbaguanine + guanosine(34) in tRNA = 7-aminomethyl-7-carbaguanosine(34) in tRNA + guanine. The protein operates within tRNA modification; tRNA-queuosine biosynthesis. Functionally, catalyzes the base-exchange of a guanine (G) residue with the queuine precursor 7-aminomethyl-7-deazaguanine (PreQ1) at position 34 (anticodon wobble position) in tRNAs with GU(N) anticodons (tRNA-Asp, -Asn, -His and -Tyr). Catalysis occurs through a double-displacement mechanism. The nucleophile active site attacks the C1' of nucleotide 34 to detach the guanine base from the RNA, forming a covalent enzyme-RNA intermediate. The proton acceptor active site deprotonates the incoming PreQ1, allowing a nucleophilic attack on the C1' of the ribose to form the product. After dissociation, two additional enzymatic reactions on the tRNA convert PreQ1 to queuine (Q), resulting in the hypermodified nucleoside queuosine (7-(((4,5-cis-dihydroxy-2-cyclopenten-1-yl)amino)methyl)-7-deazaguanosine). This chain is Queuine tRNA-ribosyltransferase, found in Psychromonas ingrahamii (strain DSM 17664 / CCUG 51855 / 37).